A 294-amino-acid chain; its full sequence is Decaprenyl-diphosphate synthase subunit 2 (294 aa).

This sequence belongs to the FPP/GGPP synthase family. Heterotetramer of 2 dps1 and 2 dlp1 subunits.

Its subcellular location is the mitochondrion. The catalysed reaction is 7 isopentenyl diphosphate + (2E,6E)-farnesyl diphosphate = all-trans-decaprenyl diphosphate + 7 diphosphate. It participates in cofactor biosynthesis; ubiquinone biosynthesis. Its function is as follows. Supplies decaprenyl diphosphate, the precursor for the side chain of the isoprenoid quinones ubiquinone-10. In Schizosaccharomyces pombe (strain 972 / ATCC 24843) (Fission yeast), this protein is Decaprenyl-diphosphate synthase subunit 2 (dlp1).